The following is a 163-amino-acid chain: Lipoprotein signal peptidase (163 aa).

A run of 3 helical transmembrane segments spans residues 11 to 31 (ILIA…IATT), 64 to 84 (MTFF…FFIN), and 88 to 108 (YNLF…GNFI). Residues aspartate 118 and aspartate 136 contribute to the active site. The chain crosses the membrane as a helical span at residues 131–151 (IFNIADSSLTIGVILIIIALL).

Belongs to the peptidase A8 family.

It is found in the cell membrane. It catalyses the reaction Release of signal peptides from bacterial membrane prolipoproteins. Hydrolyzes -Xaa-Yaa-Zaa-|-(S,diacylglyceryl)Cys-, in which Xaa is hydrophobic (preferably Leu), and Yaa (Ala or Ser) and Zaa (Gly or Ala) have small, neutral side chains.. The protein operates within protein modification; lipoprotein biosynthesis (signal peptide cleavage). Functionally, this protein specifically catalyzes the removal of signal peptides from prolipoproteins. The sequence is that of Lipoprotein signal peptidase from Staphylococcus aureus (strain bovine RF122 / ET3-1).